Reading from the N-terminus, the 118-residue chain is Nitrogenase-stabilizing/protective protein NifW (118 aa).

The protein belongs to the NifW family. In terms of assembly, homotrimer; associates with NifD.

In terms of biological role, may protect the nitrogenase Fe-Mo protein from oxidative damage. This is Nitrogenase-stabilizing/protective protein NifW from Rhodopseudomonas palustris (strain BisB5).